The primary structure comprises 130 residues: MRPSLLRLASATSTQRGLKPNPMALLPPIPLYRRLLRAHRKHLPPDMRILGDEYIKAEFRAHRKVDNPAHLIGFLTEWQMYAQKIEGDQWVGDKLDEQKLSKMSDEQIQQLYELMQAIQNRGKEGGEQES.

The N-terminal 8 residues, 1–8 (MRPSLLRL), are a transit peptide targeting the mitochondrion.

This sequence belongs to the complex I LYR family. SDHAF3 subfamily. In terms of assembly, interacts with the iron-sulfur protein subunit within the SDH catalytic dimer.

The protein resides in the mitochondrion matrix. In terms of biological role, plays an essential role in the assembly of succinate dehydrogenase (SDH), an enzyme complex (also referred to as respiratory complex II) that is a component of both the tricarboxylic acid (TCA) cycle and the mitochondrial electron transport chain, and which couples the oxidation of succinate to fumarate with the reduction of ubiquinone (coenzyme Q) to ubiquinol. Promotes maturation of the iron-sulfur protein subunit of the SDH catalytic dimer, protecting it from the deleterious effects of oxidants. May act together with SDHAF1. This Gibberella zeae (strain ATCC MYA-4620 / CBS 123657 / FGSC 9075 / NRRL 31084 / PH-1) (Wheat head blight fungus) protein is Succinate dehydrogenase assembly factor 3, mitochondrial.